Reading from the N-terminus, the 74-residue chain is Large ribosomal subunit protein uL29 (74 aa).

The protein belongs to the universal ribosomal protein uL29 family.

The chain is Large ribosomal subunit protein uL29 from Streptomyces griseus subsp. griseus (strain JCM 4626 / CBS 651.72 / NBRC 13350 / KCC S-0626 / ISP 5235).